A 44-amino-acid polypeptide reads, in one-letter code: Cytochrome b559 subunit beta (44 aa).

Residues 19 to 35 (WLSIHALAVPTIFFLGS) form a helical membrane-spanning segment. His-23 contacts heme.

The protein belongs to the PsbE/PsbF family. In terms of assembly, heterodimer of an alpha subunit and a beta subunit. PSII is composed of 1 copy each of membrane proteins PsbA, PsbB, PsbC, PsbD, PsbE, PsbF, PsbH, PsbI, PsbJ, PsbK, PsbL, PsbM, PsbT, PsbX, PsbY, PsbZ, Psb30/Ycf12, at least 3 peripheral proteins of the oxygen-evolving complex and a large number of cofactors. It forms dimeric complexes. Heme b serves as cofactor.

Its subcellular location is the plastid. The protein resides in the chloroplast thylakoid membrane. Its function is as follows. This b-type cytochrome is tightly associated with the reaction center of photosystem II (PSII). PSII is a light-driven water:plastoquinone oxidoreductase that uses light energy to abstract electrons from H(2)O, generating O(2) and a proton gradient subsequently used for ATP formation. It consists of a core antenna complex that captures photons, and an electron transfer chain that converts photonic excitation into a charge separation. The sequence is that of Cytochrome b559 subunit beta from Tetradesmus obliquus (Green alga).